Here is a 96-residue protein sequence, read N- to C-terminus: Putative pterin-4-alpha-carbinolamine dehydratase (96 aa).

Belongs to the pterin-4-alpha-carbinolamine dehydratase family.

The enzyme catalyses (4aS,6R)-4a-hydroxy-L-erythro-5,6,7,8-tetrahydrobiopterin = (6R)-L-erythro-6,7-dihydrobiopterin + H2O. The protein is Putative pterin-4-alpha-carbinolamine dehydratase of Caulobacter sp. (strain K31).